The following is a 258-amino-acid chain: Imidazole glycerol phosphate synthase subunit HisF (258 aa).

Active-site residues include D11 and D130.

It belongs to the HisA/HisF family. In terms of assembly, heterodimer of HisH and HisF.

Its subcellular location is the cytoplasm. The catalysed reaction is 5-[(5-phospho-1-deoxy-D-ribulos-1-ylimino)methylamino]-1-(5-phospho-beta-D-ribosyl)imidazole-4-carboxamide + L-glutamine = D-erythro-1-(imidazol-4-yl)glycerol 3-phosphate + 5-amino-1-(5-phospho-beta-D-ribosyl)imidazole-4-carboxamide + L-glutamate + H(+). It functions in the pathway amino-acid biosynthesis; L-histidine biosynthesis; L-histidine from 5-phospho-alpha-D-ribose 1-diphosphate: step 5/9. Functionally, IGPS catalyzes the conversion of PRFAR and glutamine to IGP, AICAR and glutamate. The HisF subunit catalyzes the cyclization activity that produces IGP and AICAR from PRFAR using the ammonia provided by the HisH subunit. The protein is Imidazole glycerol phosphate synthase subunit HisF of Nitrobacter winogradskyi (strain ATCC 25391 / DSM 10237 / CIP 104748 / NCIMB 11846 / Nb-255).